Consider the following 200-residue polypeptide: Dephospho-CoA kinase (200 aa).

The region spanning 3–200 (VIGLTGGIGS…KKYMTLAQGS (198 aa)) is the DPCK domain. ATP is bound at residue 11-16 (GSGKTS).

Belongs to the CoaE family.

Its subcellular location is the cytoplasm. It catalyses the reaction 3'-dephospho-CoA + ATP = ADP + CoA + H(+). It functions in the pathway cofactor biosynthesis; coenzyme A biosynthesis; CoA from (R)-pantothenate: step 5/5. Functionally, catalyzes the phosphorylation of the 3'-hydroxyl group of dephosphocoenzyme A to form coenzyme A. The protein is Dephospho-CoA kinase of Nitrosospira multiformis (strain ATCC 25196 / NCIMB 11849 / C 71).